A 95-amino-acid chain; its full sequence is Hiracin-JM79 immunity factor (95 aa).

Its function is as follows. Imparts immunity to bacteriocin hiracin-JM79 to naturally sensitive host strains. The sequence is that of Hiracin-JM79 immunity factor from Enterococcus hirae.